A 351-amino-acid polypeptide reads, in one-letter code: Cell cycle control protein 50B (351 aa).

Topologically, residues 1–33 (MTWSATARGAHQPDNTAFTQQRLPAWQPLLSAS) are cytoplasmic. Residues 34–54 (IALPLFFCAGLAFIGLGLGLY) form a helical membrane-spanning segment. Topologically, residues 55-315 (YSSNGIKELE…SISWMGGKNP (261 aa)) are exoplasmic loop. 3 N-linked (GlcNAc...) asparagine glycosylation sites follow: asparagine 75, asparagine 213, and asparagine 286. A helical transmembrane segment spans residues 316-336 (FLGIAYLVVGSLCILTGFVML). Over 337-351 (VVYIRYQDQDDDDEE) the chain is Cytoplasmic.

This sequence belongs to the CDC50/LEM3 family. As to quaternary structure, component of a P4-ATPase flippase complex which consists of a catalytic alpha subunit and an accessory beta subunit. Interacts with alpha subunits ATP8A1, ATP8B1, ATP8B2 and ATP8B4.

The protein localises to the cell membrane. Functionally, accessory component of a P4-ATPase flippase complex which catalyzes the hydrolysis of ATP coupled to the transport of aminophospholipids from the outer to the inner leaflet of various membranes and ensures the maintenance of asymmetric distribution of phospholipids. Phospholipid translocation also seems to be implicated in vesicle formation and in uptake of lipid signaling molecules. The beta subunit may assist in binding of the phospholipid substrate. Can mediate the export of alpha subunits ATP8A1, ATP8B1, ATP8B2 and ATP8B4 from the ER to the plasma membrane. In Homo sapiens (Human), this protein is Cell cycle control protein 50B (TMEM30B).